The sequence spans 246 residues: 4-hydroxy-tetrahydrodipicolinate reductase (246 aa).

NAD(+)-binding positions include 8 to 13, Asp-34, 74 to 76, and 101 to 104; these read GALGRM, GTT, and APNF. His-131 (proton donor/acceptor) is an active-site residue. His-132 contributes to the (S)-2,3,4,5-tetrahydrodipicolinate binding site. Lys-135 functions as the Proton donor in the catalytic mechanism. A (S)-2,3,4,5-tetrahydrodipicolinate-binding site is contributed by 141-142; it reads GT.

It belongs to the DapB family.

The protein localises to the cytoplasm. The enzyme catalyses (S)-2,3,4,5-tetrahydrodipicolinate + NAD(+) + H2O = (2S,4S)-4-hydroxy-2,3,4,5-tetrahydrodipicolinate + NADH + H(+). It carries out the reaction (S)-2,3,4,5-tetrahydrodipicolinate + NADP(+) + H2O = (2S,4S)-4-hydroxy-2,3,4,5-tetrahydrodipicolinate + NADPH + H(+). It functions in the pathway amino-acid biosynthesis; L-lysine biosynthesis via DAP pathway; (S)-tetrahydrodipicolinate from L-aspartate: step 4/4. Its function is as follows. Catalyzes the conversion of 4-hydroxy-tetrahydrodipicolinate (HTPA) to tetrahydrodipicolinate. This chain is 4-hydroxy-tetrahydrodipicolinate reductase, found in Thermobifida fusca (strain YX).